We begin with the raw amino-acid sequence, 23 residues long: NADH-ubiquinone oxidoreductase 29 kDa subunit (23 aa).

Complex I is composed of about 45 different subunits.

The protein localises to the mitochondrion inner membrane. The enzyme catalyses a ubiquinone + NADH + 5 H(+)(in) = a ubiquinol + NAD(+) + 4 H(+)(out). Its function is as follows. Transfer of electrons from NADH to the respiratory chain. The immediate electron acceptor for the enzyme is believed to be ubiquinone. This is NADH-ubiquinone oxidoreductase 29 kDa subunit from Solanum tuberosum (Potato).